The primary structure comprises 197 residues: Small ribosomal subunit protein uS4B (197 aa).

Residues 88–153 (CRLDNMVYRM…IEKYLSNLKN (66 aa)) enclose the S4 RNA-binding domain.

It belongs to the universal ribosomal protein uS4 family. In terms of assembly, part of the 30S ribosomal subunit. Contacts protein S5. The interaction surface between S4 and S5 is involved in control of translational fidelity.

One of the primary rRNA binding proteins, it binds directly to 16S rRNA where it nucleates assembly of the body of the 30S subunit. Its function is as follows. With S5 and S12 plays an important role in translational accuracy. The chain is Small ribosomal subunit protein uS4B from Alkaliphilus oremlandii (strain OhILAs) (Clostridium oremlandii (strain OhILAs)).